A 442-amino-acid chain; its full sequence is Protein translocase subunit SecF (442 aa).

The interval 1-39 (MASKAKTGRDDEATSAVELTEATESAVARTDGDSTTDTA) is disordered. Transmembrane regions (helical) follow at residues 67 to 87 (WFGV…FRGF), 187 to 207 (ITKK…LYIT), 218 to 238 (AITA…LVGF), 243 to 263 (ATVI…VIVF), 301 to 321 (LIGV…LGVG), and 331 to 351 (LIGI…LLVT). The tract at residues 366-442 (VLKRRNSGSP…PTGKRNAGRR (77 aa)) is disordered. Over residues 402–432 (QASSQSAPRAAQGSSKPAPGARPVRPVGTRR) the composition is skewed to low complexity. Over residues 433–442 (PTGKRNAGRR) the composition is skewed to basic residues.

This sequence belongs to the SecD/SecF family. SecF subfamily. Forms a complex with SecD. Part of the essential Sec protein translocation apparatus which comprises SecA, SecYEG and auxiliary proteins SecDF. Other proteins may also be involved.

The protein localises to the cell membrane. Its function is as follows. Part of the Sec protein translocase complex. Interacts with the SecYEG preprotein conducting channel. SecDF uses the proton motive force (PMF) to complete protein translocation after the ATP-dependent function of SecA. This chain is Protein translocase subunit SecF, found in Mycobacterium tuberculosis (strain ATCC 25618 / H37Rv).